The following is a 151-amino-acid chain: Large ribosomal subunit protein bL9 (151 aa).

It belongs to the bacterial ribosomal protein bL9 family.

In terms of biological role, binds to the 23S rRNA. In Bordetella bronchiseptica (strain ATCC BAA-588 / NCTC 13252 / RB50) (Alcaligenes bronchisepticus), this protein is Large ribosomal subunit protein bL9.